The following is a 272-amino-acid chain: Phosphate import ATP-binding protein PstB (272 aa).

One can recognise an ABC transporter domain in the interval 26–267 (LEIRNLDLSY…PRKRKTEDYI (242 aa)). 58–65 (GPSGCGKS) provides a ligand contact to ATP.

It belongs to the ABC transporter superfamily. Phosphate importer (TC 3.A.1.7) family. As to quaternary structure, the complex is composed of two ATP-binding proteins (PstB), two transmembrane proteins (PstC and PstA) and a solute-binding protein (PstS).

It is found in the cell inner membrane. It catalyses the reaction phosphate(out) + ATP + H2O = ADP + 2 phosphate(in) + H(+). In terms of biological role, part of the ABC transporter complex PstSACB involved in phosphate import. Responsible for energy coupling to the transport system. The chain is Phosphate import ATP-binding protein PstB from Shewanella denitrificans (strain OS217 / ATCC BAA-1090 / DSM 15013).